Consider the following 319-residue polypeptide: tRNA U34 carboxymethyltransferase (319 aa).

Carboxy-S-adenosyl-L-methionine contacts are provided by residues lysine 88, tryptophan 102, lysine 107, glycine 126, 176-177 (LE), methionine 192, tyrosine 196, and arginine 311.

Belongs to the class I-like SAM-binding methyltransferase superfamily. CmoB family. Homotetramer.

The enzyme catalyses carboxy-S-adenosyl-L-methionine + 5-hydroxyuridine(34) in tRNA = 5-carboxymethoxyuridine(34) in tRNA + S-adenosyl-L-homocysteine + H(+). Functionally, catalyzes carboxymethyl transfer from carboxy-S-adenosyl-L-methionine (Cx-SAM) to 5-hydroxyuridine (ho5U) to form 5-carboxymethoxyuridine (cmo5U) at position 34 in tRNAs. In Pseudomonas syringae pv. tomato (strain ATCC BAA-871 / DC3000), this protein is tRNA U34 carboxymethyltransferase.